The following is a 128-amino-acid chain: Small ribosomal subunit protein uS11 (128 aa).

This sequence belongs to the universal ribosomal protein uS11 family. As to quaternary structure, part of the 30S ribosomal subunit. Interacts with proteins S7 and S18. Binds to IF-3.

In terms of biological role, located on the platform of the 30S subunit, it bridges several disparate RNA helices of the 16S rRNA. Forms part of the Shine-Dalgarno cleft in the 70S ribosome. The chain is Small ribosomal subunit protein uS11 from Chloroherpeton thalassium (strain ATCC 35110 / GB-78).